A 264-amino-acid polypeptide reads, in one-letter code: Undecaprenyl-diphosphatase (264 aa).

The next 8 helical transmembrane spans lie at 7–27 (IVLALIQGLSEFLPISSSAHL), 41–61 (LIFDVVVHMGTLSAVIFYYQA), 89–109 (VLLGTIPIGLVGMIFKDFVAV), 114–134 (IEIIAYTTLVFGLLLGFASWF), 144–164 (TISWIDVSFVSMMQILALIPG), 186–206 (IQFSFLLSIPVITLSLILMLI), 219–239 (LLVLGFVISTISAYATIIFVI), and 244–264 (MVGMTPFVIYRLILGVFLFFL).

This sequence belongs to the UppP family.

Its subcellular location is the cell inner membrane. The enzyme catalyses di-trans,octa-cis-undecaprenyl diphosphate + H2O = di-trans,octa-cis-undecaprenyl phosphate + phosphate + H(+). Its function is as follows. Catalyzes the dephosphorylation of undecaprenyl diphosphate (UPP). Confers resistance to bacitracin. This is Undecaprenyl-diphosphatase from Vesicomyosocius okutanii subsp. Calyptogena okutanii (strain HA).